The sequence spans 235 residues: Carbohydrate deacetylase (235 aa).

Residues H61 and H124 each contribute to the Mg(2+) site.

Belongs to the YdjC deacetylase family. Mg(2+) is required as a cofactor.

Probably catalyzes the deacetylation of acetylated carbohydrates an important step in the degradation of oligosaccharides. The polypeptide is Carbohydrate deacetylase (Bacillus cereus (strain B4264)).